The chain runs to 1096 residues: DNA-directed RNA polymerase subunit beta (1096 aa).

Residues 1070 to 1096 (LMQDVNPRRSTPSRPTYESLGSDYQED) are disordered.

It belongs to the RNA polymerase beta chain family. In cyanobacteria the RNAP catalytic core is composed of 2 alpha, 1 beta, 1 beta', 1 gamma and 1 omega subunit. When a sigma factor is associated with the core the holoenzyme is formed, which can initiate transcription.

It carries out the reaction RNA(n) + a ribonucleoside 5'-triphosphate = RNA(n+1) + diphosphate. In terms of biological role, DNA-dependent RNA polymerase catalyzes the transcription of DNA into RNA using the four ribonucleoside triphosphates as substrates. This chain is DNA-directed RNA polymerase subunit beta, found in Prochlorococcus marinus (strain MIT 9211).